A 300-amino-acid chain; its full sequence is Solute carrier family 25 member 35 (300 aa).

Solcar repeat units follow at residues Met-1–Gly-90, His-100–Leu-193, and Gln-203–Leu-294. A run of 6 helical transmembrane segments spans residues Thr-38 to Gly-58, Leu-59 to Ile-79, Gly-91 to Leu-119, Ala-169 to Thr-190, Trp-205 to Pro-225, and Leu-277 to Lys-300.

Belongs to the mitochondrial carrier (TC 2.A.29) family.

It is found in the mitochondrion inner membrane. It catalyses the reaction a dicarboxylate(in) + sulfate(out) = a dicarboxylate(out) + sulfate(in). In terms of biological role, putative antiporter that exchanges dicarboxylates and sulfur oxoanions across the inner membrane of mitochondria. The protein is Solute carrier family 25 member 35 (SLC25A35) of Homo sapiens (Human).